The chain runs to 291 residues: Urease accessory protein UreD (291 aa).

This sequence belongs to the UreD family. As to quaternary structure, ureD, UreF and UreG form a complex that acts as a GTP-hydrolysis-dependent molecular chaperone, activating the urease apoprotein by helping to assemble the nickel containing metallocenter of UreC. The UreE protein probably delivers the nickel.

It localises to the cytoplasm. Its function is as follows. Required for maturation of urease via the functional incorporation of the urease nickel metallocenter. The protein is Urease accessory protein UreD of Polynucleobacter asymbioticus (strain DSM 18221 / CIP 109841 / QLW-P1DMWA-1) (Polynucleobacter necessarius subsp. asymbioticus).